Consider the following 153-residue polypeptide: Large ribosomal subunit protein uL15 (153 aa).

The tract at residues 21–40 (RGIGSGKGKTGGRGIKGQKS) is disordered. A compositionally biased stretch (gly residues) spans 23–35 (IGSGKGKTGGRGI).

It belongs to the universal ribosomal protein uL15 family. Part of the 50S ribosomal subunit.

In terms of biological role, binds to the 23S rRNA. In Rickettsia canadensis (strain McKiel), this protein is Large ribosomal subunit protein uL15.